Here is a 128-residue protein sequence, read N- to C-terminus: Diacylglycerol kinase (128 aa).

E34 provides a ligand contact to a divalent metal cation. Helical transmembrane passes span 35–55 (SAFR…SYLA) and 58–78 (FLEW…ELIN). Residue E75 is the Proton acceptor of the active site. E82 contacts a divalent metal cation. Residues 107 to 127 (QLIGLIFWTLIWGRYLLALYL) traverse the membrane as a helical segment.

It belongs to the bacterial diacylglycerol kinase family. It depends on Mg(2+) as a cofactor.

Its subcellular location is the cell inner membrane. It carries out the reaction a 1,2-diacyl-sn-glycerol + ATP = a 1,2-diacyl-sn-glycero-3-phosphate + ADP + H(+). Catalyzes the ATP-dependent phosphorylation of sn-l,2-diacylglycerol (DAG) to phosphatidic acid. Involved in the recycling of diacylglycerol produced as a by-product during membrane-derived oligosaccharide (MDO) biosynthesis. This is Diacylglycerol kinase (dgkA) from Helicobacter pylori (strain ATCC 700392 / 26695) (Campylobacter pylori).